Reading from the N-terminus, the 359-residue chain is MQILADLLNTIPAIDSTAMSRAQRHIDGLLKPVGSLGKLEVLAIQLAGMPGLNGIPHVGKKAVLVMCADHGVWEEGVAISPKEVTAIQAENMTRGTTGVCVLAEQAGANVHVIDVGIDTAEPIPGLINMRVARGSGNIASAPAMSRRQAEKLLLDVICYTQELAKNGVTLFGVGELGMANTTPAAAIVSTITGRDPEEVVGIGANLPTDKLANKIDVVRRAITLNQPNPQDGVDVLAKVGGFDLVGIAGVMLGAASCGLPVLLDGFLSYAAALAACQMSPAIKPYLIPSHLSAEKGARIALSHLGLEPYLNMEMRLGEGSGAALAMPIIEAACAIYNNMGELAASNIVLPGNTTSDLNS.

Glu318 functions as the Proton acceptor in the catalytic mechanism.

The protein belongs to the CobT family. As to quaternary structure, homodimer.

The enzyme catalyses 5,6-dimethylbenzimidazole + nicotinate beta-D-ribonucleotide = alpha-ribazole 5'-phosphate + nicotinate + H(+). It participates in nucleoside biosynthesis; alpha-ribazole biosynthesis; alpha-ribazole from 5,6-dimethylbenzimidazole: step 1/2. Its function is as follows. Catalyzes the synthesis of alpha-ribazole-5'-phosphate from nicotinate mononucleotide (NAMN) and 5,6-dimethylbenzimidazole (DMB). The protein is Nicotinate-nucleotide--dimethylbenzimidazole phosphoribosyltransferase of Escherichia coli O81 (strain ED1a).